Here is a 406-residue protein sequence, read N- to C-terminus: Bifunctional enzyme IspD/IspF (406 aa).

The 2-C-methyl-D-erythritol 4-phosphate cytidylyltransferase stretch occupies residues 1–246; sequence MLQMPSKQPI…KLSASLLPDV (246 aa). The tract at residues 247–406 is 2-C-methyl-D-erythritol 2,4-cyclodiphosphate synthase; sequence RTGNGYDVHQ…ATVVYRGVKR (160 aa). A divalent metal cation-binding residues include Asp-253 and His-255. 4-CDP-2-C-methyl-D-erythritol 2-phosphate-binding positions include 253 to 255 and 279 to 280; these read DVH and HS. His-287 is a binding site for a divalent metal cation. Residues 301–303, 377–380, Phe-384, and Arg-387 contribute to the 4-CDP-2-C-methyl-D-erythritol 2-phosphate site; these read DIG and TTNE.

It in the N-terminal section; belongs to the IspD/TarI cytidylyltransferase family. IspD subfamily. The protein in the C-terminal section; belongs to the IspF family. It depends on a divalent metal cation as a cofactor.

It catalyses the reaction 2-C-methyl-D-erythritol 4-phosphate + CTP + H(+) = 4-CDP-2-C-methyl-D-erythritol + diphosphate. It carries out the reaction 4-CDP-2-C-methyl-D-erythritol 2-phosphate = 2-C-methyl-D-erythritol 2,4-cyclic diphosphate + CMP. It participates in isoprenoid biosynthesis; isopentenyl diphosphate biosynthesis via DXP pathway; isopentenyl diphosphate from 1-deoxy-D-xylulose 5-phosphate: step 2/6. The protein operates within isoprenoid biosynthesis; isopentenyl diphosphate biosynthesis via DXP pathway; isopentenyl diphosphate from 1-deoxy-D-xylulose 5-phosphate: step 4/6. Bifunctional enzyme that catalyzes the formation of 4-diphosphocytidyl-2-C-methyl-D-erythritol from CTP and 2-C-methyl-D-erythritol 4-phosphate (MEP) (IspD), and catalyzes the conversion of 4-diphosphocytidyl-2-C-methyl-D-erythritol 2-phosphate (CDP-ME2P) to 2-C-methyl-D-erythritol 2,4-cyclodiphosphate (ME-CPP) with a corresponding release of cytidine 5-monophosphate (CMP) (IspF). This Rhizobium leguminosarum bv. trifolii (strain WSM2304) protein is Bifunctional enzyme IspD/IspF.